A 417-amino-acid chain; its full sequence is Phosphoglycerate kinase (417 aa).

Val-23, Asp-24, Phe-25, Asn-26, Gln-39, Arg-40, Ser-63, His-64, Gly-66, Arg-67, Leu-122, Arg-123, His-170, and Arg-171 together coordinate (2R)-3-phosphoglycerate. Gly-214 contacts ADP. Gly-214 contacts CDP. Residues Ala-215 and Lys-216 each contribute to the AMP site. Ala-215 is a binding site for ATP. Ala-215 lines the Mg(2+) pocket. Asp-219 is a binding site for CDP. Asp-219 is a binding site for Mg(2+). AMP is bound at residue Lys-220. Position 220 (Lys-220) interacts with ATP. Gly-238 serves as a coordination point for ADP. Gly-238 contributes to the CDP binding site. Residues Ala-239 and Gly-313 each contribute to the AMP site. ATP is bound by residues Ala-239 and Gly-313. 2 residues coordinate CDP: Gly-338 and Phe-343. Phe-343 provides a ligand contact to ADP. Glu-344 contacts AMP. The ATP site is built by Glu-344, Asp-375, and Thr-376. A Mg(2+)-binding site is contributed by Asp-375.

It belongs to the phosphoglycerate kinase family. As to quaternary structure, monomer. The cofactor is Mg(2+).

Its subcellular location is the cytoplasm. It localises to the mitochondrion. It carries out the reaction (2R)-3-phosphoglycerate + ATP = (2R)-3-phospho-glyceroyl phosphate + ADP. It functions in the pathway carbohydrate degradation; glycolysis; pyruvate from D-glyceraldehyde 3-phosphate: step 2/5. In terms of biological role, catalyzes one of the two ATP producing reactions in the glycolytic pathway via the reversible conversion of 1,3-diphosphoglycerate to 3-phosphoglycerate. Both L- and D- forms of purine and pyrimidine nucleotides can be used as substrates, but the activity is much lower on pyrimidines. Negatively regulates the biosynthesis of acetyl-CoA from pyruvate in the mitochondrion. This chain is Phosphoglycerate kinase (pgkA), found in Aspergillus oryzae (strain ATCC 42149 / RIB 40) (Yellow koji mold).